The sequence spans 357 residues: tRNA N6-adenosine threonylcarbamoyltransferase (357 aa).

Residues histidine 115 and histidine 119 each coordinate Fe cation. Substrate contacts are provided by residues 137-141, aspartate 170, glycine 183, and asparagine 281; that span reads LASGG. Position 309 (aspartate 309) interacts with Fe cation.

This sequence belongs to the KAE1 / TsaD family. Fe(2+) serves as cofactor.

It localises to the cytoplasm. The enzyme catalyses L-threonylcarbamoyladenylate + adenosine(37) in tRNA = N(6)-L-threonylcarbamoyladenosine(37) in tRNA + AMP + H(+). Its function is as follows. Required for the formation of a threonylcarbamoyl group on adenosine at position 37 (t(6)A37) in tRNAs that read codons beginning with adenine. Is involved in the transfer of the threonylcarbamoyl moiety of threonylcarbamoyl-AMP (TC-AMP) to the N6 group of A37, together with TsaE and TsaB. TsaD likely plays a direct catalytic role in this reaction. This chain is tRNA N6-adenosine threonylcarbamoyltransferase, found in Nitrobacter winogradskyi (strain ATCC 25391 / DSM 10237 / CIP 104748 / NCIMB 11846 / Nb-255).